The following is a 277-amino-acid chain: 2-dehydro-3-deoxyphosphooctonate aldolase (277 aa).

Belongs to the KdsA family.

The protein resides in the cytoplasm. The catalysed reaction is D-arabinose 5-phosphate + phosphoenolpyruvate + H2O = 3-deoxy-alpha-D-manno-2-octulosonate-8-phosphate + phosphate. It participates in carbohydrate biosynthesis; 3-deoxy-D-manno-octulosonate biosynthesis; 3-deoxy-D-manno-octulosonate from D-ribulose 5-phosphate: step 2/3. It functions in the pathway bacterial outer membrane biogenesis; lipopolysaccharide biosynthesis. The polypeptide is 2-dehydro-3-deoxyphosphooctonate aldolase (Hydrogenovibrio crunogenus (strain DSM 25203 / XCL-2) (Thiomicrospira crunogena)).